The chain runs to 772 residues: Annulin (772 aa).

S-palmitoyl cysteine attachment occurs at residues cysteine 4 and cysteine 5. Residues 15–57 (NEGSGGGIPLMPVRGGSTRRPDSLPKPPAAVVPSPPSPGDVPD) are disordered. Over residues 38–53 (LPKPPAAVVPSPPSPG) the composition is skewed to pro residues. Catalysis depends on residues histidine 400 and aspartate 427. Asparagine 467, aspartate 469, glutamate 517, and glutamate 522 together coordinate Ca(2+).

It belongs to the transglutaminase superfamily. Transglutaminase family. Requires Ca(2+) as cofactor. Has an annular, or ring-like expression pattern in epithelial annuli of developing limb segment boundary cells. In embryos, it is seen in gastrulating cells, in cells surrounding rapidly dividing neuroblasts, and in muscle pioneer cells invaginating to form apodemes.

The protein localises to the cell membrane. It carries out the reaction L-glutaminyl-[protein] + L-lysyl-[protein] = [protein]-L-lysyl-N(6)-5-L-glutamyl-[protein] + NH4(+). Participates in morphogenetic activities of the cells, maybe by stabilizing the membrane or subcortical structures of cells that are under mechanical stress. Probably catalyzes the cross-linking of proteins and the conjugation of polyamines to proteins. The sequence is that of Annulin from Schistocerca americana (American grasshopper).